Here is a 580-residue protein sequence, read N- to C-terminus: uncharacterized protein (580 aa).

Polar residues predominate over residues 1 to 44; sequence MSESSVNADTPKNTNDVLNGAYQSATTEPEGQYRSATDNPSLYQ. The tract at residues 1 to 45 is disordered; the sequence is MSESSVNADTPKNTNDVLNGAYQSATTEPEGQYRSATDNPSLYQV. Residue Ser-99 is modified to Phosphoserine. Transmembrane regions (helical) follow at residues 143-163, 177-197, 207-227, 235-255, 265-285, 295-315, 370-390, 405-425, 450-470, 476-496, 511-533, and 546-566; these read IYAY…PASA, LLNV…WAPM, LYIG…AQDI, FFGG…FADM, ITIF…VGGF, WTEY…YLFC, PIVF…YLLL, LGVS…GCGI, LPPM…LAWS, VHWI…LLIF, AASV…PLFA, and GSLL…FFFF.

It belongs to the major facilitator superfamily. CAR1 family.

It is found in the membrane. This is an uncharacterized protein from Schizosaccharomyces pombe (strain 972 / ATCC 24843) (Fission yeast).